The primary structure comprises 407 residues: Protein S-acyltransferase 8 (407 aa).

2 consecutive transmembrane segments (helical) span residues 29-49 (SLPLTLLLIIVPVVLFCVFVA) and 62-82 (GYAIMVVAILFTIYVLILLFF). Positions 136 to 186 (KYCDTCMLYRPPRCSHCSICNNCVERFDHHCPWVGQCIGLRNYRYFFMFVS) constitute a DHHC domain. The active-site S-palmitoyl cysteine intermediate is Cys166. The next 2 helical transmembrane spans lie at 181–201 (FFMFVSSSTLLCIYIFSMSAV) and 224–244 (AVVLMIYCFIALWFVGGLTAF). A disordered region spans residues 348 to 368 (AEDANNNQPHHTLDIDHERAG). Over residues 358–368 (HTLDIDHERAG) the composition is skewed to basic and acidic residues. Phosphoserine is present on Ser385.

Belongs to the DHHC palmitoyltransferase family. Expressed in flowers and pollen.

It is found in the cell membrane. The enzyme catalyses L-cysteinyl-[protein] + hexadecanoyl-CoA = S-hexadecanoyl-L-cysteinyl-[protein] + CoA. Functionally, S-acyltransferase involved in protein lipid modification. The chain is Protein S-acyltransferase 8 (PAT08) from Arabidopsis thaliana (Mouse-ear cress).